The following is a 55-amino-acid chain: ATP synthase F(0) complex subunit 8 (55 aa).

A helical membrane pass occupies residues 7–24 (NPWFFIMLLSWLTFSLII). Residues 35–55 (NPPSNKTTTHTKTTPWTWPWT) form a disordered region. The span at 37-55 (PSNKTTTHTKTTPWTWPWT) shows a compositional bias: low complexity.

Belongs to the ATPase protein 8 family. As to quaternary structure, component of the ATP synthase complex composed at least of ATP5F1A/subunit alpha, ATP5F1B/subunit beta, ATP5MC1/subunit c (homooctomer), MT-ATP6/subunit a, MT-ATP8/subunit 8, ATP5ME/subunit e, ATP5MF/subunit f, ATP5MG/subunit g, ATP5MK/subunit k, ATP5MJ/subunit j, ATP5F1C/subunit gamma, ATP5F1D/subunit delta, ATP5F1E/subunit epsilon, ATP5PF/subunit F6, ATP5PB/subunit b, ATP5PD/subunit d, ATP5PO/subunit OSCP. ATP synthase complex consists of a soluble F(1) head domain (subunits alpha(3) and beta(3)) - the catalytic core - and a membrane F(0) domain - the membrane proton channel (subunits c, a, 8, e, f, g, k and j). These two domains are linked by a central stalk (subunits gamma, delta, and epsilon) rotating inside the F1 region and a stationary peripheral stalk (subunits F6, b, d, and OSCP).

It localises to the mitochondrion membrane. In terms of biological role, subunit 8, of the mitochondrial membrane ATP synthase complex (F(1)F(0) ATP synthase or Complex V) that produces ATP from ADP in the presence of a proton gradient across the membrane which is generated by electron transport complexes of the respiratory chain. ATP synthase complex consist of a soluble F(1) head domain - the catalytic core - and a membrane F(1) domain - the membrane proton channel. These two domains are linked by a central stalk rotating inside the F(1) region and a stationary peripheral stalk. During catalysis, ATP synthesis in the catalytic domain of F(1) is coupled via a rotary mechanism of the central stalk subunits to proton translocation. In vivo, can only synthesize ATP although its ATP hydrolase activity can be activated artificially in vitro. Part of the complex F(0) domain. In Chaetura pelagica (Chimney swift), this protein is ATP synthase F(0) complex subunit 8.